Consider the following 295-residue polypeptide: Putative F-box protein At5g44220 (295 aa).

Residues S56–F102 form the F-box domain.

This is Putative F-box protein At5g44220 from Arabidopsis thaliana (Mouse-ear cress).